Reading from the N-terminus, the 327-residue chain is Lipoyl synthase (327 aa).

[4Fe-4S] cluster contacts are provided by cysteine 74, cysteine 79, cysteine 85, cysteine 100, cysteine 104, cysteine 107, and serine 314. The region spanning phenylalanine 86–lysine 303 is the Radical SAM core domain.

This sequence belongs to the radical SAM superfamily. Lipoyl synthase family. [4Fe-4S] cluster serves as cofactor.

Its subcellular location is the cytoplasm. It carries out the reaction [[Fe-S] cluster scaffold protein carrying a second [4Fe-4S](2+) cluster] + N(6)-octanoyl-L-lysyl-[protein] + 2 oxidized [2Fe-2S]-[ferredoxin] + 2 S-adenosyl-L-methionine + 4 H(+) = [[Fe-S] cluster scaffold protein] + N(6)-[(R)-dihydrolipoyl]-L-lysyl-[protein] + 4 Fe(3+) + 2 hydrogen sulfide + 2 5'-deoxyadenosine + 2 L-methionine + 2 reduced [2Fe-2S]-[ferredoxin]. Its pathway is protein modification; protein lipoylation via endogenous pathway; protein N(6)-(lipoyl)lysine from octanoyl-[acyl-carrier-protein]: step 2/2. Catalyzes the radical-mediated insertion of two sulfur atoms into the C-6 and C-8 positions of the octanoyl moiety bound to the lipoyl domains of lipoate-dependent enzymes, thereby converting the octanoylated domains into lipoylated derivatives. The protein is Lipoyl synthase of Pseudomonas paraeruginosa (strain DSM 24068 / PA7) (Pseudomonas aeruginosa (strain PA7)).